The primary structure comprises 162 residues: G/U mismatch-specific DNA glycosylase (162 aa).

This sequence belongs to the uracil-DNA glycosylase (UDG) superfamily. TDG/mug family. Binds DNA as a monomer.

The protein resides in the cytoplasm. The enzyme catalyses Specifically hydrolyzes mismatched double-stranded DNA and polynucleotides, releasing free uracil.. Functionally, excises ethenocytosine and uracil, which can arise by alkylation or deamination of cytosine, respectively, from the corresponding mispairs with guanine in ds-DNA. It is capable of hydrolyzing the carbon-nitrogen bond between the sugar-phosphate backbone of the DNA and the mispaired base. The complementary strand guanine functions in substrate recognition. Required for DNA damage lesion repair in stationary-phase cells. The protein is G/U mismatch-specific DNA glycosylase of Serratia marcescens.